We begin with the raw amino-acid sequence, 316 residues long: 4-hydroxy-3-methylbut-2-enyl diphosphate reductase (316 aa).

Cysteine 12 contributes to the [4Fe-4S] cluster binding site. Histidine 41 and histidine 74 together coordinate (2E)-4-hydroxy-3-methylbut-2-enyl diphosphate. Histidine 41 and histidine 74 together coordinate dimethylallyl diphosphate. Histidine 41 and histidine 74 together coordinate isopentenyl diphosphate. [4Fe-4S] cluster is bound at residue cysteine 96. Histidine 124 is a (2E)-4-hydroxy-3-methylbut-2-enyl diphosphate binding site. Dimethylallyl diphosphate is bound at residue histidine 124. Histidine 124 lines the isopentenyl diphosphate pocket. Glutamate 126 (proton donor) is an active-site residue. Residue threonine 169 participates in (2E)-4-hydroxy-3-methylbut-2-enyl diphosphate binding. Cysteine 199 serves as a coordination point for [4Fe-4S] cluster. Residues serine 227, serine 228, asparagine 229, and serine 271 each coordinate (2E)-4-hydroxy-3-methylbut-2-enyl diphosphate. 4 residues coordinate dimethylallyl diphosphate: serine 227, serine 228, asparagine 229, and serine 271. Positions 227, 228, 229, and 271 each coordinate isopentenyl diphosphate.

This sequence belongs to the IspH family. Requires [4Fe-4S] cluster as cofactor.

The catalysed reaction is isopentenyl diphosphate + 2 oxidized [2Fe-2S]-[ferredoxin] + H2O = (2E)-4-hydroxy-3-methylbut-2-enyl diphosphate + 2 reduced [2Fe-2S]-[ferredoxin] + 2 H(+). It carries out the reaction dimethylallyl diphosphate + 2 oxidized [2Fe-2S]-[ferredoxin] + H2O = (2E)-4-hydroxy-3-methylbut-2-enyl diphosphate + 2 reduced [2Fe-2S]-[ferredoxin] + 2 H(+). It functions in the pathway isoprenoid biosynthesis; dimethylallyl diphosphate biosynthesis; dimethylallyl diphosphate from (2E)-4-hydroxy-3-methylbutenyl diphosphate: step 1/1. Its pathway is isoprenoid biosynthesis; isopentenyl diphosphate biosynthesis via DXP pathway; isopentenyl diphosphate from 1-deoxy-D-xylulose 5-phosphate: step 6/6. Its function is as follows. Catalyzes the conversion of 1-hydroxy-2-methyl-2-(E)-butenyl 4-diphosphate (HMBPP) into a mixture of isopentenyl diphosphate (IPP) and dimethylallyl diphosphate (DMAPP). Acts in the terminal step of the DOXP/MEP pathway for isoprenoid precursor biosynthesis. The polypeptide is 4-hydroxy-3-methylbut-2-enyl diphosphate reductase (Vibrio vulnificus (strain CMCP6)).